Reading from the N-terminus, the 313-residue chain is Ribosomal protein L11 methyltransferase (313 aa).

S-adenosyl-L-methionine contacts are provided by threonine 161, glycine 182, aspartate 204, and asparagine 247.

It belongs to the methyltransferase superfamily. PrmA family.

The protein localises to the cytoplasm. It carries out the reaction L-lysyl-[protein] + 3 S-adenosyl-L-methionine = N(6),N(6),N(6)-trimethyl-L-lysyl-[protein] + 3 S-adenosyl-L-homocysteine + 3 H(+). Methylates ribosomal protein L11. The polypeptide is Ribosomal protein L11 methyltransferase (Halalkalibacterium halodurans (strain ATCC BAA-125 / DSM 18197 / FERM 7344 / JCM 9153 / C-125) (Bacillus halodurans)).